The primary structure comprises 311 residues: Homoserine kinase (311 aa).

Pro-88–Ala-98 is a binding site for ATP.

The protein belongs to the GHMP kinase family. Homoserine kinase subfamily.

It localises to the cytoplasm. It carries out the reaction L-homoserine + ATP = O-phospho-L-homoserine + ADP + H(+). The protein operates within amino-acid biosynthesis; L-threonine biosynthesis; L-threonine from L-aspartate: step 4/5. Catalyzes the ATP-dependent phosphorylation of L-homoserine to L-homoserine phosphate. The chain is Homoserine kinase from Saccharolobus islandicus (strain L.S.2.15 / Lassen #1) (Sulfolobus islandicus).